A 300-amino-acid polypeptide reads, in one-letter code: Ribosomal protein bS6--L-glutamate ligase (300 aa).

An ATP-grasp domain is found at 104 to 287 (MQLLARQGID…IAGKMIRWIE (184 aa)). ATP is bound by residues K141, 178 to 179 (EY), D187, and 211 to 213 (RSN). Residues D248, E260, and N262 each contribute to the Mg(2+) site. Mn(2+) contacts are provided by D248, E260, and N262.

It belongs to the RimK family. Mg(2+) is required as a cofactor. It depends on Mn(2+) as a cofactor.

Its function is as follows. An L-glutamate ligase that catalyzes the ATP-dependent post-translational addition of glutamate residues to the C-terminus of ribosomal protein bS6 (RpsF). Is also able to catalyze the synthesis of poly-alpha-glutamate in vitro, via ATP hydrolysis from unprotected glutamate as substrate. The number of glutamate residues added to either RpsF or to poly-alpha-glutamate changes with pH. This chain is Ribosomal protein bS6--L-glutamate ligase, found in Shigella dysenteriae serotype 1 (strain Sd197).